The primary structure comprises 142 residues: Large ribosomal subunit protein uL11 (142 aa).

Belongs to the universal ribosomal protein uL11 family. As to quaternary structure, part of the ribosomal stalk of the 50S ribosomal subunit. Interacts with L10 and the large rRNA to form the base of the stalk. L10 forms an elongated spine to which L12 dimers bind in a sequential fashion forming a multimeric L10(L12)X complex. Post-translationally, one or more lysine residues are methylated.

In terms of biological role, forms part of the ribosomal stalk which helps the ribosome interact with GTP-bound translation factors. This chain is Large ribosomal subunit protein uL11, found in Xanthomonas oryzae pv. oryzae (strain MAFF 311018).